Consider the following 125-residue polypeptide: Membrane protein BRI3 (125 aa).

A run of 2 helical transmembrane segments spans residues 67 to 86 (YPAN…VGVL) and 92 to 112 (FLGI…CFAL).

It belongs to the BRI3 family. As to quaternary structure, interacts with BRI3BP. Interacts with MGAT1 and IFITM3. Interacts with BRI3BP, MGAT1 and IFITM3; the interactions are weaker than with isoform 1.

It is found in the lysosome membrane. It localises to the cytoplasm. The protein localises to the perinuclear region. The protein resides in the nucleus. Its function is as follows. Participates in tumor necrosis factor-alpha (TNF)-induced cell death. May be a target of Wnt/beta-catenin signaling in the liver. This is Membrane protein BRI3 (BRI3) from Homo sapiens (Human).